The sequence spans 689 residues: Glycine--tRNA ligase beta subunit (689 aa).

This sequence belongs to the class-II aminoacyl-tRNA synthetase family. As to quaternary structure, tetramer of two alpha and two beta subunits.

Its subcellular location is the cytoplasm. The enzyme catalyses tRNA(Gly) + glycine + ATP = glycyl-tRNA(Gly) + AMP + diphosphate. The polypeptide is Glycine--tRNA ligase beta subunit (Shewanella sediminis (strain HAW-EB3)).